The primary structure comprises 126 residues: Small ribosomal subunit protein uS13 (126 aa).

Positions 94-126 (RGLPVHGQRTSTNARTRKGPRRAIAGKKKPGKK) are disordered. Over residues 108-126 (RTRKGPRRAIAGKKKPGKK) the composition is skewed to basic residues.

This sequence belongs to the universal ribosomal protein uS13 family. Part of the 30S ribosomal subunit. Forms a loose heterodimer with protein S19. Forms two bridges to the 50S subunit in the 70S ribosome.

In terms of biological role, located at the top of the head of the 30S subunit, it contacts several helices of the 16S rRNA. In the 70S ribosome it contacts the 23S rRNA (bridge B1a) and protein L5 of the 50S subunit (bridge B1b), connecting the 2 subunits; these bridges are implicated in subunit movement. Contacts the tRNAs in the A and P-sites. This Streptomyces griseus subsp. griseus (strain JCM 4626 / CBS 651.72 / NBRC 13350 / KCC S-0626 / ISP 5235) protein is Small ribosomal subunit protein uS13.